The primary structure comprises 256 residues: Hydroxyacylglutathione hydrolase (256 aa).

Zn(2+) is bound by residues His-57, His-59, Asp-61, His-62, His-115, Asp-134, and His-172.

Belongs to the metallo-beta-lactamase superfamily. Glyoxalase II family. As to quaternary structure, monomer. It depends on Zn(2+) as a cofactor.

The catalysed reaction is an S-(2-hydroxyacyl)glutathione + H2O = a 2-hydroxy carboxylate + glutathione + H(+). It functions in the pathway secondary metabolite metabolism; methylglyoxal degradation; (R)-lactate from methylglyoxal: step 2/2. Thiolesterase that catalyzes the hydrolysis of S-D-lactoyl-glutathione to form glutathione and D-lactic acid. The chain is Hydroxyacylglutathione hydrolase from Rhizobium johnstonii (strain DSM 114642 / LMG 32736 / 3841) (Rhizobium leguminosarum bv. viciae).